Consider the following 720-residue polypeptide: GTPase-activating protein gyp2 (720 aa).

The 66-residue stretch at 20–85 (LDPASFFRIN…AAVRKLEREN (66 aa)) folds into the GRAM domain. The Rab-GAP TBC domain occupies 216 to 404 (GIPNNLRADI…RILDCLFVNG (189 aa)).

The protein localises to the cytoplasm. It localises to the nucleus. Its function is as follows. Stimulates specifically the GTPase activity of ypt2 and ryh1. Inactivates ryh1 during recycling between the endosome and the Golgi compartments. In Schizosaccharomyces pombe (strain 972 / ATCC 24843) (Fission yeast), this protein is GTPase-activating protein gyp2.